Reading from the N-terminus, the 884-residue chain is Protein P (884 aa).

Positions 1 to 184 (MHPFSRLFRN…GKPYSWEHRQ (184 aa)) are terminal protein domain (TP). Positions 185 to 387 (LVQHNGQQHK…YCIHHIVSSL (203 aa)) are spacer. The disordered stretch occupies residues 299 to 345 (RNSGHTTWFSSASNSNKSRSREKAYSSNSTSKRYSPPLNYEKSDFSS). Residues 388 to 729 (DDWGPCTVTG…YEELWPVVRQ (342 aa)) form a polymerase/reverse transcriptase domain (RT) region. The Reverse transcriptase domain maps to 398-639 (DVTIKSPRTP…NHLHFMGYVI (242 aa)). Residues aspartate 470, aspartate 590, and aspartate 591 each contribute to the Mg(2+) site.

It belongs to the hepadnaviridae P protein family.

The enzyme catalyses DNA(n) + a 2'-deoxyribonucleoside 5'-triphosphate = DNA(n+1) + diphosphate. The catalysed reaction is Endonucleolytic cleavage to 5'-phosphomonoester.. Its activity is regulated as follows. Activated by host HSP70 and HSP40 in vitro to be able to bind the epsilon loop of the pgRNA. Because deletion of the RNase H region renders the protein partly chaperone-independent, the chaperones may be needed indirectly to relieve occlusion of the RNA-binding site by this domain. Inhibited by several reverse-transcriptase inhibitors: Lamivudine, Adefovir and Entecavir. In terms of biological role, multifunctional enzyme that converts the viral RNA genome into dsDNA in viral cytoplasmic capsids. This enzyme displays a DNA polymerase activity that can copy either DNA or RNA templates, and a ribonuclease H (RNase H) activity that cleaves the RNA strand of RNA-DNA heteroduplexes in a partially processive 3'- to 5'-endonucleasic mode. Neo-synthesized pregenomic RNA (pgRNA) are encapsidated together with the P protein, and reverse-transcribed inside the nucleocapsid. Initiation of reverse-transcription occurs first by binding the epsilon loop on the pgRNA genome, and is initiated by protein priming, thereby the 5'-end of (-)DNA is covalently linked to P protein. Partial (+)DNA is synthesized from the (-)DNA template and generates the relaxed circular DNA (RC-DNA) genome. After budding and infection, the RC-DNA migrates in the nucleus, and is converted into a plasmid-like covalently closed circular DNA (cccDNA). The activity of P protein does not seem to be necessary for cccDNA generation, and is presumably released from (+)DNA by host nuclear DNA repair machinery. The protein is Protein P of Marmota monax (Woodchuck).